Consider the following 408-residue polypeptide: Repulsive guidance molecule B homolog drag-1 (408 aa).

The signal sequence occupies residues 1–22 (MSIVYLVSITFIFSVFKPITSC). Residues 23-387 (RVEECAAWFQ…SEIFKKCIPS (365 aa)) are Extracellular-facing. Residues N60, N134, N183, and N376 are each glycosylated (N-linked (GlcNAc...) asparagine). Residues 388-408 (KSIRFYPFLAIFFFALLSLLC) form a helical membrane-spanning segment.

It belongs to the repulsive guidance molecule (RGM) family. In terms of assembly, interacts with unc-40 (via FN6 domain), dbl-1 and sma-6. As to expression, expressed in pharyngeal, hypodermal and intestinal cells.

The protein resides in the cell membrane. Probably in association with the cell surface receptor unc-40, positively modulates the BMP-like Sma/Mab signaling pathway through interaction with both the ligand dbl-1 and its type I receptor sma-6. Regulates body size and this may be through modulation of the Sma/Mab signaling pathway. The polypeptide is Repulsive guidance molecule B homolog drag-1 (Caenorhabditis elegans).